The chain runs to 133 residues: Transcription antitermination protein NusB (133 aa).

Belongs to the NusB family.

Its function is as follows. Involved in transcription antitermination. Required for transcription of ribosomal RNA (rRNA) genes. Binds specifically to the boxA antiterminator sequence of the ribosomal RNA (rrn) operons. The protein is Transcription antitermination protein NusB of Pediococcus pentosaceus (strain ATCC 25745 / CCUG 21536 / LMG 10740 / 183-1w).